Reading from the N-terminus, the 155-residue chain is Large ribosomal subunit protein uL22c (155 aa).

This sequence belongs to the universal ribosomal protein uL22 family. Part of the 50S ribosomal subunit.

It localises to the plastid. It is found in the chloroplast. Functionally, this protein binds specifically to 23S rRNA. The globular domain of the protein is located near the polypeptide exit tunnel on the outside of the subunit, while an extended beta-hairpin is found that lines the wall of the exit tunnel in the center of the 70S ribosome. This is Large ribosomal subunit protein uL22c (rpl22) from Solanum bulbocastanum (Wild potato).